Here is a 31-residue protein sequence, read N- to C-terminus: Gamma-conotoxin-like As7a (31 aa).

Intrachain disulfides connect cysteine 2–cysteine 16, cysteine 9–cysteine 20, and cysteine 15–cysteine 31. A 4-carboxyglutamate modification is found at glutamate 14.

The protein belongs to the conotoxin O1 superfamily. As to expression, expressed by the venom duct.

It is found in the secreted. Functionally, gamma-conotoxins may act on voltage-gated non-specific cation pacemaker channels (HCN). Elicits toxic effects in the freshwater snail Pomacea paludosa after intramuscular injection, but it has no effect when injected intracerebrally into mice. This is Gamma-conotoxin-like As7a from Conus cancellatus (Cancellate cone).